Here is a 209-residue protein sequence, read N- to C-terminus: MHRQLRYAVLATALFASTAFAAARQELDTFTRGLKGLDGQFSQRVTDANGKVKENSSGRVALATPRQFRWEYAKPYRQLIVADGKKVWVFDPDLEQVTVRAQGSEEQNSPLVALINPALLDKKYDVSEEAAPRDGLQWLSLTPKVDTDASFQMASLGFGKDGLAKMEVVDAVGQRTTISFSGWKRNPAFAADTFRYTPAQGVDVVGDAH.

Residues 1 to 21 (MHRQLRYAVLATALFASTAFA) form the signal peptide.

Belongs to the LolA family. As to quaternary structure, monomer.

It localises to the periplasm. Functionally, participates in the translocation of lipoproteins from the inner membrane to the outer membrane. Only forms a complex with a lipoprotein if the residue after the N-terminal Cys is not an aspartate (The Asp acts as a targeting signal to indicate that the lipoprotein should stay in the inner membrane). This chain is Outer-membrane lipoprotein carrier protein, found in Xanthomonas oryzae pv. oryzae (strain MAFF 311018).